Reading from the N-terminus, the 213-residue chain is Leucyl/phenylalanyl-tRNA--protein transferase (213 aa).

Belongs to the L/F-transferase family.

The protein resides in the cytoplasm. It catalyses the reaction N-terminal L-lysyl-[protein] + L-leucyl-tRNA(Leu) = N-terminal L-leucyl-L-lysyl-[protein] + tRNA(Leu) + H(+). It carries out the reaction N-terminal L-arginyl-[protein] + L-leucyl-tRNA(Leu) = N-terminal L-leucyl-L-arginyl-[protein] + tRNA(Leu) + H(+). The enzyme catalyses L-phenylalanyl-tRNA(Phe) + an N-terminal L-alpha-aminoacyl-[protein] = an N-terminal L-phenylalanyl-L-alpha-aminoacyl-[protein] + tRNA(Phe). Functionally, functions in the N-end rule pathway of protein degradation where it conjugates Leu, Phe and, less efficiently, Met from aminoacyl-tRNAs to the N-termini of proteins containing an N-terminal arginine or lysine. This chain is Leucyl/phenylalanyl-tRNA--protein transferase, found in Campylobacter lari (strain RM2100 / D67 / ATCC BAA-1060).